A 599-amino-acid polypeptide reads, in one-letter code: DNA primase (599 aa).

A CHC2-type zinc finger spans residues 40–64 (CPFHGENTPSFSVSPDKQLYHCFGC). The 84-residue stretch at 259 to 342 (NEAVLFEGYV…KVAMIPDGLD (84 aa)) folds into the Toprim domain. The Mg(2+) site is built by glutamate 265, aspartate 309, and aspartate 311.

Belongs to the DnaG primase family. In terms of assembly, monomer. Interacts with DnaB. The cofactor is Zn(2+). Mg(2+) is required as a cofactor.

It catalyses the reaction ssDNA + n NTP = ssDNA/pppN(pN)n-1 hybrid + (n-1) diphosphate.. Functionally, RNA polymerase that catalyzes the synthesis of short RNA molecules used as primers for DNA polymerase during DNA replication. In Halalkalibacterium halodurans (strain ATCC BAA-125 / DSM 18197 / FERM 7344 / JCM 9153 / C-125) (Bacillus halodurans), this protein is DNA primase.